Consider the following 362-residue polypeptide: Vignain (362 aa).

An N-terminal signal peptide occupies residues 1–20 (MATKKLLWVVLSFSLVLGVA). The propeptide at 21–131 (NSFDFHDKDL…YEKVVSVPPS (111 aa)) is activation peptide. 3 disulfide bridges follow: Cys-149-Cys-191, Cys-183-Cys-224, and Cys-282-Cys-334. Residue Cys-152 is part of the active site. Active-site residues include His-288 and Asn-309. 2 N-linked (GlcNAc...) asparagine glycosylation sites follow: Asn-326 and Asn-346. The Prevents secretion from ER motif lies at 359-362 (KDEL).

The protein belongs to the peptidase C1 family. Monomer.

Its subcellular location is the endoplasmic reticulum lumen. Thought to be involved in the hydrolysis of stored seed proteins. This is Vignain from Phaseolus vulgaris (Kidney bean).